The chain runs to 357 residues: MSRPTRLVIEPSALLHNLSQIKHLAPGKKVIAMVKANAYGCGVREVAPVLDGRIEAFGVACLEEALAIRALGVETPCILFQGVFSSDELSVAVENDFACVLHHAQQLEWLIKTPLPYPIKVWVKVNTGMHRLGFKIHELQKVMGALQTCTWVDKSIGLMTHLACADEPHRPENQQQISLFQEISIPGFRQRSIANSAAIISFPDSQADVVRPGIMLYGVSPFANQNAHDLGLIPVMRFMSAISAIHDNPSFAQVGYGGTWKSDKPSRIGVVAAGYGDGYPRHISEKTPVWVRGREVSIVGRVSMDMLTIDLTEHPDIEIGDEVELWGTHVLVERIAKSAGTVGYELLCQISERVRYK.

Lys35 serves as the catalytic Proton acceptor; specific for D-alanine. N6-(pyridoxal phosphate)lysine is present on Lys35. Substrate is bound at residue Arg131. Residue Tyr256 is the Proton acceptor; specific for L-alanine of the active site. Position 304 (Met304) interacts with substrate.

Belongs to the alanine racemase family. Requires pyridoxal 5'-phosphate as cofactor.

The catalysed reaction is L-alanine = D-alanine. Its pathway is amino-acid biosynthesis; D-alanine biosynthesis; D-alanine from L-alanine: step 1/1. Functionally, catalyzes the interconversion of L-alanine and D-alanine. May also act on other amino acids. This is Alanine racemase (alr) from Legionella pneumophila (strain Paris).